A 209-amino-acid polypeptide reads, in one-letter code: Large ribosomal subunit protein uL3 (209 aa).

An N5-methylglutamine modification is found at Gln-150.

This sequence belongs to the universal ribosomal protein uL3 family. In terms of assembly, part of the 50S ribosomal subunit. Forms a cluster with proteins L14 and L19. In terms of processing, methylated by PrmB.

Functionally, one of the primary rRNA binding proteins, it binds directly near the 3'-end of the 23S rRNA, where it nucleates assembly of the 50S subunit. This Vibrio campbellii (strain ATCC BAA-1116) protein is Large ribosomal subunit protein uL3.